We begin with the raw amino-acid sequence, 268 residues long: Tryptophan synthase alpha chain (268 aa).

Residues Glu49 and Asp60 each act as proton acceptor in the active site.

It belongs to the TrpA family. As to quaternary structure, tetramer of two alpha and two beta chains.

It catalyses the reaction (1S,2R)-1-C-(indol-3-yl)glycerol 3-phosphate + L-serine = D-glyceraldehyde 3-phosphate + L-tryptophan + H2O. It participates in amino-acid biosynthesis; L-tryptophan biosynthesis; L-tryptophan from chorismate: step 5/5. The alpha subunit is responsible for the aldol cleavage of indoleglycerol phosphate to indole and glyceraldehyde 3-phosphate. This chain is Tryptophan synthase alpha chain, found in Xanthomonas euvesicatoria pv. vesicatoria (strain 85-10) (Xanthomonas campestris pv. vesicatoria).